Consider the following 125-residue polypeptide: Small ribosomal subunit protein uS12 (125 aa).

Asp-89 carries the 3-methylthioaspartic acid modification. Residues 105 to 125 (AGVKDRKQARSKYGAKRPKAA) are disordered. The segment covering 113-125 (ARSKYGAKRPKAA) has biased composition (basic residues).

The protein belongs to the universal ribosomal protein uS12 family. Part of the 30S ribosomal subunit. Contacts proteins S8 and S17. May interact with IF1 in the 30S initiation complex.

In terms of biological role, with S4 and S5 plays an important role in translational accuracy. Its function is as follows. Interacts with and stabilizes bases of the 16S rRNA that are involved in tRNA selection in the A site and with the mRNA backbone. Located at the interface of the 30S and 50S subunits, it traverses the body of the 30S subunit contacting proteins on the other side and probably holding the rRNA structure together. The combined cluster of proteins S8, S12 and S17 appears to hold together the shoulder and platform of the 30S subunit. This chain is Small ribosomal subunit protein uS12, found in Methylobacillus flagellatus (strain ATCC 51484 / DSM 6875 / VKM B-1610 / KT).